The sequence spans 338 residues: Lipoate-protein ligase A (338 aa).

A BPL/LPL catalytic domain is found at 29–216 (PATQRVLFLW…AFFAHYGERV (188 aa)). Residues arginine 71, 76–79 (GAVF), and lysine 134 each bind ATP. Lysine 134 lines the (R)-lipoate pocket.

This sequence belongs to the LplA family. In terms of assembly, monomer.

The protein localises to the cytoplasm. The catalysed reaction is L-lysyl-[lipoyl-carrier protein] + (R)-lipoate + ATP = N(6)-[(R)-lipoyl]-L-lysyl-[lipoyl-carrier protein] + AMP + diphosphate + H(+). It participates in protein modification; protein lipoylation via exogenous pathway; protein N(6)-(lipoyl)lysine from lipoate: step 1/2. The protein operates within protein modification; protein lipoylation via exogenous pathway; protein N(6)-(lipoyl)lysine from lipoate: step 2/2. In terms of biological role, catalyzes both the ATP-dependent activation of exogenously supplied lipoate to lipoyl-AMP and the transfer of the activated lipoyl onto the lipoyl domains of lipoate-dependent enzymes. The polypeptide is Lipoate-protein ligase A (Shigella sonnei (strain Ss046)).